A 349-amino-acid chain; its full sequence is S-adenosylmethionine:tRNA ribosyltransferase-isomerase (349 aa).

This sequence belongs to the QueA family. In terms of assembly, monomer.

It localises to the cytoplasm. The enzyme catalyses 7-aminomethyl-7-carbaguanosine(34) in tRNA + S-adenosyl-L-methionine = epoxyqueuosine(34) in tRNA + adenine + L-methionine + 2 H(+). It functions in the pathway tRNA modification; tRNA-queuosine biosynthesis. Its function is as follows. Transfers and isomerizes the ribose moiety from AdoMet to the 7-aminomethyl group of 7-deazaguanine (preQ1-tRNA) to give epoxyqueuosine (oQ-tRNA). In Cupriavidus pinatubonensis (strain JMP 134 / LMG 1197) (Cupriavidus necator (strain JMP 134)), this protein is S-adenosylmethionine:tRNA ribosyltransferase-isomerase.